Consider the following 403-residue polypeptide: S-adenosylmethionine synthase (403 aa).

ATP is bound at residue H15. D17 contributes to the Mg(2+) binding site. Residue E43 coordinates K(+). Positions 56 and 99 each coordinate L-methionine. Positions 99–109 (QSPHIAQGVDR) are flexible loop. Residues 166 to 168 (DAK), 232 to 233 (KF), D241, 247 to 248 (RK), A264, and K268 each bind ATP. D241 contacts L-methionine. K272 is a binding site for L-methionine.

Belongs to the AdoMet synthase family. As to quaternary structure, homotetramer; dimer of dimers. Mg(2+) is required as a cofactor. K(+) serves as cofactor.

The protein resides in the cytoplasm. It catalyses the reaction L-methionine + ATP + H2O = S-adenosyl-L-methionine + phosphate + diphosphate. Its pathway is amino-acid biosynthesis; S-adenosyl-L-methionine biosynthesis; S-adenosyl-L-methionine from L-methionine: step 1/1. In terms of biological role, catalyzes the formation of S-adenosylmethionine (AdoMet) from methionine and ATP. The overall synthetic reaction is composed of two sequential steps, AdoMet formation and the subsequent tripolyphosphate hydrolysis which occurs prior to release of AdoMet from the enzyme. This chain is S-adenosylmethionine synthase, found in Stenotrophomonas maltophilia (strain R551-3).